We begin with the raw amino-acid sequence, 174 residues long: Cathepsin B-like cysteine proteinase 3 (174 aa).

2 disulfide bridges follow: cysteine 22-cysteine 55 and cysteine 30-cysteine 42. Active-site residues include histidine 122 and asparagine 142.

This sequence belongs to the peptidase C1 family.

Expression of the protease correlates with blood-feeding and suggests a role for the protease in blood digestion. This chain is Cathepsin B-like cysteine proteinase 3 (CP-3), found in Ostertagia ostertagi (Brown stomach worm).